The primary structure comprises 239 residues: Uridylate kinase (239 aa).

Position 10 to 13 (10 to 13 (KLSG)) interacts with ATP. Glycine 53 serves as a coordination point for UMP. Positions 54 and 58 each coordinate ATP. UMP contacts are provided by residues aspartate 73 and 135–142 (TGRPYFTT). Residues asparagine 163, tyrosine 169, and aspartate 172 each coordinate ATP.

The protein belongs to the UMP kinase family. In terms of assembly, homohexamer.

The protein resides in the cytoplasm. The catalysed reaction is UMP + ATP = UDP + ADP. It functions in the pathway pyrimidine metabolism; CTP biosynthesis via de novo pathway; UDP from UMP (UMPK route): step 1/1. With respect to regulation, inhibited by UTP. In terms of biological role, catalyzes the reversible phosphorylation of UMP to UDP. The chain is Uridylate kinase from Mycoplasmopsis synoviae (strain 53) (Mycoplasma synoviae).